A 130-amino-acid chain; its full sequence is Small ribosomal subunit protein uS8 (130 aa).

Belongs to the universal ribosomal protein uS8 family. Component of the small ribosomal subunit (SSU). Mature N.crassa ribosomes consist of a small (40S) and a large (60S) subunit. The 40S small subunit contains 1 molecule of ribosomal RNA (18S rRNA) and at least 32 different proteins. The large 60S subunit contains 3 rRNA molecules (26S, 5.8S and 5S rRNA) and at least 42 different proteins.

Its subcellular location is the cytoplasm. Component of the ribosome, a large ribonucleoprotein complex responsible for the synthesis of proteins in the cell. The small ribosomal subunit (SSU) binds messenger RNAs (mRNAs) and translates the encoded message by selecting cognate aminoacyl-transfer RNA (tRNA) molecules. The large subunit (LSU) contains the ribosomal catalytic site termed the peptidyl transferase center (PTC), which catalyzes the formation of peptide bonds, thereby polymerizing the amino acids delivered by tRNAs into a polypeptide chain. The nascent polypeptides leave the ribosome through a tunnel in the LSU and interact with protein factors that function in enzymatic processing, targeting, and the membrane insertion of nascent chains at the exit of the ribosomal tunnel. The chain is Small ribosomal subunit protein uS8 (crp-27) from Neurospora crassa (strain ATCC 24698 / 74-OR23-1A / CBS 708.71 / DSM 1257 / FGSC 987).